Reading from the N-terminus, the 102-residue chain is Hemoglobin subunit beta-Z (102 aa).

The Globin domain occupies 1–102 (FGNLSSAQAI…VANALSHKYH (102 aa)). Heme b is bound by residues H19 and H48.

This sequence belongs to the globin family. Heterotetramer of two alpha chains and two beta chains.

Functionally, this is an embryonic beta chain. This Mesocricetus auratus (Golden hamster) protein is Hemoglobin subunit beta-Z (HBBZ).